The chain runs to 484 residues: UDP-glucose:undecaprenyl-phosphate glucose-1-phosphate transferase (484 aa).

5 helical membrane-spanning segments follow: residues 37–57 (MVVASGLIAYRIVFGTWVPAA), 59–79 (YRVAIATTLLYSVICFALFPL), 93–113 (VVLGGAFGGVFALFAVHALIV), 122–142 (GWVGLWFVGGLVSLVAARTLL), and 299–319 (ILAVIALMGLWPLMLAIAVGV).

Belongs to the bacterial sugar transferase family.

It localises to the cell inner membrane. It carries out the reaction di-trans,octa-cis-undecaprenyl phosphate + UDP-alpha-D-glucose = alpha-D-glucosyl di-trans,octa-cis-undecaprenyl diphosphate + UMP. It participates in glycan biosynthesis; xanthan biosynthesis. Is the initiating enzyme for the synthesis of the exopolysaccharide xanthan. Catalyzes the transfer of the glucose-1-phosphate moiety from UDP-Glc onto the carrier lipid undecaprenyl phosphate (C55-P), forming a phosphoanhydride bond yielding to glucosyl-pyrophosphoryl-undecaprenol (Glc-PP-C55). This Xanthomonas campestris pv. campestris protein is UDP-glucose:undecaprenyl-phosphate glucose-1-phosphate transferase (gumD).